Here is a 460-residue protein sequence, read N- to C-terminus: Chromosomal replication initiator protein DnaA (460 aa).

The tract at residues 1-73 (MEISIDSLWS…ANVVQSILGH (73 aa)) is domain I, interacts with DnaA modulators. Positions 73–116 (HPVEIYITVAKGEEFEEIGGGGAWELPTTNSIYETPNQNRQPNT) are domain II. The segment at 117–333 (ELNAKYVFSR…GALTRALAYI (217 aa)) is domain III, AAA+ region. ATP-binding residues include glycine 161, glycine 163, lysine 164, and threonine 165. Residues 334 to 460 (SIWGLPMTVA…MNSRSRKPSL (127 aa)) are domain IV, binds dsDNA.

The protein belongs to the DnaA family. Oligomerizes as a right-handed, spiral filament on DNA at oriC.

It localises to the cytoplasm. In terms of biological role, plays an essential role in the initiation and regulation of chromosomal replication. ATP-DnaA binds to the origin of replication (oriC) to initiate formation of the DNA replication initiation complex once per cell cycle. Binds the DnaA box (a 9 base pair repeat at the origin) and separates the double-stranded (ds)DNA. Forms a right-handed helical filament on oriC DNA; dsDNA binds to the exterior of the filament while single-stranded (ss)DNA is stabiized in the filament's interior. The ATP-DnaA-oriC complex binds and stabilizes one strand of the AT-rich DNA unwinding element (DUE), permitting loading of DNA polymerase. After initiation quickly degrades to an ADP-DnaA complex that is not apt for DNA replication. Binds acidic phospholipids. This chain is Chromosomal replication initiator protein DnaA, found in Trichormus variabilis (strain ATCC 29413 / PCC 7937) (Anabaena variabilis).